We begin with the raw amino-acid sequence, 739 residues long: Phosphoribosylformylglycinamidine synthase subunit PurL (739 aa).

The active site involves His-53. Residues Tyr-56 and Lys-95 each contribute to the ATP site. Glu-97 serves as a coordination point for Mg(2+). Residues 98–101 (SHNH) and Arg-120 each bind substrate. His-99 acts as the Proton acceptor in catalysis. Position 121 (Asp-121) interacts with Mg(2+). Gln-244 is a binding site for substrate. Position 274 (Asp-274) interacts with Mg(2+). 318-320 (ESQ) lines the substrate pocket. The ATP site is built by Asp-501 and Gly-538. Asn-539 is a binding site for Mg(2+). Ser-541 contacts substrate.

Belongs to the FGAMS family. In terms of assembly, monomer. Part of the FGAM synthase complex composed of 1 PurL, 1 PurQ and 2 PurS subunits.

The protein localises to the cytoplasm. It carries out the reaction N(2)-formyl-N(1)-(5-phospho-beta-D-ribosyl)glycinamide + L-glutamine + ATP + H2O = 2-formamido-N(1)-(5-O-phospho-beta-D-ribosyl)acetamidine + L-glutamate + ADP + phosphate + H(+). It functions in the pathway purine metabolism; IMP biosynthesis via de novo pathway; 5-amino-1-(5-phospho-D-ribosyl)imidazole from N(2)-formyl-N(1)-(5-phospho-D-ribosyl)glycinamide: step 1/2. Its function is as follows. Part of the phosphoribosylformylglycinamidine synthase complex involved in the purines biosynthetic pathway. Catalyzes the ATP-dependent conversion of formylglycinamide ribonucleotide (FGAR) and glutamine to yield formylglycinamidine ribonucleotide (FGAM) and glutamate. The FGAM synthase complex is composed of three subunits. PurQ produces an ammonia molecule by converting glutamine to glutamate. PurL transfers the ammonia molecule to FGAR to form FGAM in an ATP-dependent manner. PurS interacts with PurQ and PurL and is thought to assist in the transfer of the ammonia molecule from PurQ to PurL. The protein is Phosphoribosylformylglycinamidine synthase subunit PurL of Listeria monocytogenes serotype 4a (strain HCC23).